The sequence spans 160 residues: Protein Vago (160 aa).

The N-terminal stretch at 1 to 23 (MESISSMIYLVAMMSLIIGGSQA) is a signal peptide.

As to expression, expressed in fat body.

The protein resides in the secreted. In terms of biological role, probably involved in the antiviral immune response. May have a role in controlling viral load in the adult fat body, after infection with viruses such as the Drosophila C virus. The polypeptide is Protein Vago (Drosophila melanogaster (Fruit fly)).